Reading from the N-terminus, the 565-residue chain is MLRLNLRFLSFLLCIIQSVELQAAPSVPTFLTENGLTYCTHASGFSFNPQTADAGTSMNVVTEQIYNKLFDIKNHSATLTPMLAQSYSISADGKEILLNLRHGVKFHQTPWFTPTRDFNAEDVVFSINRVLGGHNTYLPTLAETNVTYSNPQYRVFHEQARKVRFPYFDSIKLNEKIKSVTALSPYQVKIELFAPDSSILSHLASQYAIIFSQEYAYQLSADDNLAQLDTHPVGTGPYQVKDYVYNQYVRLVRNENYWKKEAKIEHIIVDLSTDRSGRLVKFFNNECQIASYPEVSQIGLLKNDDKHYYMQSTDGMNLAYLAFNFDKPLMRDHEIRAAISQSLNRARIIHSIYHNTATVANNIIPEVSWASSVNTPEFEFDYNPKIAKNKLADKNLLLNLWVINEEQVYNPAPFKIAEMIKWDLAQAGVKVKVRAVTRPFLTAQLRNQSENYDLILSGWLAGNLDPDGFMRPILSCGTKNELTNLSNWCNEEFDQFMDRAITTSHLSSRAKAYNEAQELVLRELPIIPIANVKRILVANSRVKGVKMTPFGSLDFSTLYFIQEKY.

The N-terminal stretch at 1–23 (MLRLNLRFLSFLLCIIQSVELQA) is a signal peptide.

The protein belongs to the bacterial solute-binding protein 5 family.

It localises to the periplasm. Involved in a peptide intake transport system that plays a role in the resistance to antimicrobial peptides. The sequence is that of Peptide transport periplasmic protein SapA (sapA) from Haemophilus influenzae (strain ATCC 51907 / DSM 11121 / KW20 / Rd).